Consider the following 183-residue polypeptide: MSSTQDTRLIWIDLEMTGLDTDNDQIIEIATIITDDHLNIVAEGPVLAVHQPDRILNAMDEWNTRQHGQSGLIERVRRSKLTARDVELQTLEFLKKWVNPKTSPMCGNSICQDRRFMHRLMPELEQYFHYRNLDVSSVKELAKRWRPEIMSGLKKNASHLAMDDIRDSISELKYYREYFFIKN.

In terms of domain architecture, Exonuclease spans 9–172 (LIWIDLEMTG…DDIRDSISEL (164 aa)). The active site involves tyrosine 130.

This sequence belongs to the oligoribonuclease family.

The protein resides in the cytoplasm. Functionally, 3'-to-5' exoribonuclease specific for small oligoribonucleotides. The chain is Oligoribonuclease from Acinetobacter baylyi (strain ATCC 33305 / BD413 / ADP1).